The following is a 149-amino-acid chain: MERTFLMIKPDAVQRNLIGEVISRIERKGLKLVGGKLMQVPMELAETHYGEHQGKPFYNDLISFITSAPVFAMVVEGEDAVNVSRHIIGSTNPSEASPGSIRGDLGLTVGRNIIHGSDSLESAEREINLWFNENEITSYASPRDAWLYE.

ATP-binding residues include Lys-9, Phe-57, Arg-85, Thr-91, Arg-102, and Asn-112. His-115 (pros-phosphohistidine intermediate) is an active-site residue.

The protein belongs to the NDK family. In terms of assembly, homotetramer. Mg(2+) is required as a cofactor.

It is found in the cytoplasm. It carries out the reaction a 2'-deoxyribonucleoside 5'-diphosphate + ATP = a 2'-deoxyribonucleoside 5'-triphosphate + ADP. The enzyme catalyses a ribonucleoside 5'-diphosphate + ATP = a ribonucleoside 5'-triphosphate + ADP. Functionally, major role in the synthesis of nucleoside triphosphates other than ATP. The ATP gamma phosphate is transferred to the NDP beta phosphate via a ping-pong mechanism, using a phosphorylated active-site intermediate. This is Nucleoside diphosphate kinase from Staphylococcus aureus (strain Mu3 / ATCC 700698).